The chain runs to 677 residues: UPF0652 protein (677 aa).

Residues 38-84 (ETPGMCCECTDQPAEVVCLQCQDELCTVCSTSLHRRGSRRSHIFKNK) form a B box-type; atypical zinc finger. Residues Cys43, Cys46, Cys66, and His71 each contribute to the Zn(2+) site. The segment covering 91–111 (YDELNKRDRQPPLHGKEDEKV) has biased composition (basic and acidic residues). Disordered stretches follow at residues 91–142 (YDEL…NNNI) and 156–192 (LNPL…IDED). A compositionally biased stretch (low complexity) spans 113–126 (NNNNNNNNTNNTNN). Polar residues predominate over residues 163-178 (HTNQQRNGGGSNNHQI).

The protein belongs to the UPF0652 family.

This chain is UPF0652 protein, found in Dictyostelium discoideum (Social amoeba).